The primary structure comprises 867 residues: MFFEILIGASAKAVKDFISHCYSRLKSIYYSFKRWLMEISGQFKAHDAFVNMCFGHMADIEDFEAELAEEFAEREDEVEEARSLLKLLVAQKSKSGVTEAWTDFFTKSRGGVYAPLSCEPTRQELEVKSEKLERLLEEQHQFEVRAAKKYIKEKGRGFINCWNDLRSRLRLVKDVKDEAKDNARAAAKIGAEMFAPVDVQDLYSFTEVKKVETGLMKEVVKEKNGEEEKHLEPIMEEVRSIKDTAEARDAASTWITETVKLKNATLNADELSLATIARYVENVGDKFKLDIASKTYLKQVASMSVPIPTNKDIKLKMVLQSPEARARRERMDVLDSVGFLEGLCTASGFESPFPILGLPEIAVTDGARLRKVSSNIRYLSQTHLGLVYKAPNASLHNALVAVERRVFTVGKGDKAIYPPRPEHDIFTDTMDYFQKSIIEEVGYCKTYPAQLLANSYSAGKRAMYHKAIASLKTVPYHQKDANVQAFLKKEKHWMTKDIAPRLICPRSKRYNIILGTRLKFNEKKIMHAIDSVFGSPTVLSGYDNFKQGRIIAKKWQKFACPVAIGVDASRFDQHVSEQALKWEHGIYNGIFGDSEMALALEHQITNNIKMFVEDKMLRFKVRGHRMSGDINTSMGNKLIMCGMMHAYLKKLGVEAELCNNGDDCVIITDRANEKLFDGMYDHFLQYGFNMVTEKPVYELEQLEFCQSKPVSINGKYRMVRRPDSIGKDSTTLLSMLNQSDVKSYMSAVAQCGLVLNAGVPILESFYKCLYRSSGYKKVSEEFIKNVISYGTDERLQGRRTYNETPITNHSRMSYWESFGVDPKIQQIVERYYDGLTVSAQLQSVKVTTPHLQSILLSIPENHSQNEY.

One can recognise a RdRp catalytic domain in the interval 561 to 676 (PVAIGVDASR…ITDRANEKLF (116 aa)).

This sequence belongs to the luteoviruses RNA polymerase family.

It catalyses the reaction RNA(n) + a ribonucleoside 5'-triphosphate = RNA(n+1) + diphosphate. Probable polymerase. This chain is Putative RNA-directed RNA polymerase, found in Avena byzantina (Oat).